A 169-amino-acid chain; its full sequence is Crossover junction endodeoxyribonuclease RuvC (169 aa).

Residues D11, E71, and H143 contribute to the active site. 3 residues coordinate Mg(2+): D11, E71, and H143.

It belongs to the RuvC family. In terms of assembly, homodimer which binds Holliday junction (HJ) DNA. The HJ becomes 2-fold symmetrical on binding to RuvC with unstacked arms; it has a different conformation from HJ DNA in complex with RuvA. In the full resolvosome a probable DNA-RuvA(4)-RuvB(12)-RuvC(2) complex forms which resolves the HJ. The cofactor is Mg(2+).

It is found in the cytoplasm. It carries out the reaction Endonucleolytic cleavage at a junction such as a reciprocal single-stranded crossover between two homologous DNA duplexes (Holliday junction).. In terms of biological role, the RuvA-RuvB-RuvC complex processes Holliday junction (HJ) DNA during genetic recombination and DNA repair. Endonuclease that resolves HJ intermediates. Cleaves cruciform DNA by making single-stranded nicks across the HJ at symmetrical positions within the homologous arms, yielding a 5'-phosphate and a 3'-hydroxyl group; requires a central core of homology in the junction. The consensus cleavage sequence is 5'-(A/T)TT(C/G)-3'. Cleavage occurs on the 3'-side of the TT dinucleotide at the point of strand exchange. HJ branch migration catalyzed by RuvA-RuvB allows RuvC to scan DNA until it finds its consensus sequence, where it cleaves and resolves the cruciform DNA. The chain is Crossover junction endodeoxyribonuclease RuvC from Mesorhizobium japonicum (strain LMG 29417 / CECT 9101 / MAFF 303099) (Mesorhizobium loti (strain MAFF 303099)).